Reading from the N-terminus, the 154-residue chain is Nuclear cap-binding protein subunit 2 (154 aa).

MRNA is bound by residues Tyr10, Tyr33, 102–106 (RVDWD), 113–117 (RQYGR), and 123–124 (QV). The RRM domain maps to 30–108 (CTLYVGNLSF…RLIRVDWDAG (79 aa)).

The protein belongs to the RRM NCBP2 family. As to quaternary structure, component of the nuclear cap-binding complex (CBC), a heterodimer composed of Cbp80 and Cbp20 that interacts with m7GpppG-capped RNA. Interacts with Ars2.

The protein resides in the nucleus. Its function is as follows. Component of the cap-binding complex (CBC), which binds co-transcriptionally to the 5' cap of pre-mRNAs and is involved in various processes such as pre-mRNA splicing and RNA-mediated gene silencing (RNAi). The CBC complex is involved in miRNA-mediated RNA interference via its interaction with Ars2 and is required for primary microRNAs (miRNAs) processing. Also involved in innate immunity via the short interfering RNAs (siRNAs) processing machinery by restricting the viral RNA production. In the CBC complex, Cbp20 recognizes and binds capped RNAs (m7GpppG-capped RNA) but requires Cbp80 to stabilize the movement of its N-terminal loop and lock the CBC into a high affinity cap-binding state with the cap structure. This chain is Nuclear cap-binding protein subunit 2 (Cbp20), found in Drosophila melanogaster (Fruit fly).